Reading from the N-terminus, the 321-residue chain is HPr kinase/phosphorylase (321 aa).

Catalysis depends on residues His143 and Lys164. 158 to 165 (GKSGVGKS) contacts ATP. Position 165 (Ser165) interacts with Mg(2+). Catalysis depends on Asp182, which acts as the Proton acceptor; for phosphorylation activity. Proton donor; for dephosphorylation activity. The segment at 206–215 (MEIRGLGILN) is important for the catalytic mechanism of both phosphorylation and dephosphorylation. Glu207 is a Mg(2+) binding site. Arg248 is a catalytic residue. The interval 269–274 (PVRPGR) is important for the catalytic mechanism of dephosphorylation.

Belongs to the HPrK/P family. As to quaternary structure, homohexamer. Mg(2+) is required as a cofactor.

The catalysed reaction is [HPr protein]-L-serine + ATP = [HPr protein]-O-phospho-L-serine + ADP + H(+). The enzyme catalyses [HPr protein]-O-phospho-L-serine + phosphate + H(+) = [HPr protein]-L-serine + diphosphate. Functionally, catalyzes the ATP- as well as the pyrophosphate-dependent phosphorylation of a specific serine residue in HPr, a phosphocarrier protein of the phosphoenolpyruvate-dependent sugar phosphotransferase system (PTS). HprK/P also catalyzes the pyrophosphate-producing, inorganic phosphate-dependent dephosphorylation (phosphorolysis) of seryl-phosphorylated HPr (P-Ser-HPr). This chain is HPr kinase/phosphorylase, found in Leptospira interrogans serogroup Icterohaemorrhagiae serovar copenhageni (strain Fiocruz L1-130).